The primary structure comprises 234 residues: tRNA (guanine-N(1)-)-methyltransferase (234 aa).

Residues Gly115 and 135–140 (VGDYIL) each bind S-adenosyl-L-methionine.

The protein belongs to the RNA methyltransferase TrmD family. In terms of assembly, homodimer.

It is found in the cytoplasm. It carries out the reaction guanosine(37) in tRNA + S-adenosyl-L-methionine = N(1)-methylguanosine(37) in tRNA + S-adenosyl-L-homocysteine + H(+). In terms of biological role, specifically methylates guanosine-37 in various tRNAs. This is tRNA (guanine-N(1)-)-methyltransferase from Rickettsia typhi (strain ATCC VR-144 / Wilmington).